Here is a 695-residue protein sequence, read N- to C-terminus: Elongation factor G (695 aa).

The tr-type G domain occupies 12 to 286; that stretch reads DKLRNIGIMA…AVIDYLPSPL (275 aa). Residues 21–28, 85–89, and 139–142 each bind GTP; these read AHIDAGKT, DTPGH, and NKMD.

Belongs to the TRAFAC class translation factor GTPase superfamily. Classic translation factor GTPase family. EF-G/EF-2 subfamily.

The protein resides in the cytoplasm. Functionally, catalyzes the GTP-dependent ribosomal translocation step during translation elongation. During this step, the ribosome changes from the pre-translocational (PRE) to the post-translocational (POST) state as the newly formed A-site-bound peptidyl-tRNA and P-site-bound deacylated tRNA move to the P and E sites, respectively. Catalyzes the coordinated movement of the two tRNA molecules, the mRNA and conformational changes in the ribosome. The polypeptide is Elongation factor G (Thermotoga sp. (strain RQ2)).